The following is a 444-amino-acid chain: E1B 55 kDa protein (444 aa).

Residues 1–35 (MEQNADMEPDRQVNQRPPRFRARGAGVRGRGRVRR) are disordered. Phosphoserine is present on residues Ser438 and Ser439.

This sequence belongs to the adenoviridae E1B 55 kDa protein family. Interacts with host PML-4 and PML-5; this interaction promotes efficient subnuclear targeting of E1B-55K to PML nuclear bodies. Interacts with E4-ORF3 protein. Interacts with E4-ORF6 protein.

Its subcellular location is the host nucleus. It is found in the host cytoplasm. Functionally, plays a major role to prevent cellular inhibition of viral genome replication. Assembles an SCF-like E3 ubiquitin ligase complex based on the cellular proteins ELOB, ELOC, CUL5 and RBX1, in cooperation with viral E4orf6. This viral RING-type ligase ubiquitinates cellular substrates and targets them to proteasomal degradation: TP53/p53, LIG4, MRE11-RAD50-NBS1 (MRN) complex, ITGA3, DAXX and BLM. E1B-55K probably acts as the substrate-specific adapter of the SCF-like E3 ubiquitin ligase complex. Degradation of host TP53/p53 activity is essential for preventing E1A-induced TP53 accumulation that would otherwise lead to cell apoptosis and growth arrest. E1B-55K also inactivates TP53 transcription-factor activity by binding its transactivation domain. E1B-55K also functions as a SUMO1 E3 ligase for TP53 which causes the latter to be sequestered in promyelocytic leukemia (PML) nuclear bodies thereby contributing to maximal inhibition of TP53 function. The chain is E1B 55 kDa protein from Canis lupus familiaris (Dog).